The following is a 356-amino-acid chain: Mitogen-activated protein kinase PMK11 (356 aa).

Residues 24 to 312 (YDIQDVVGEG…VEEALKHPYL (289 aa)) form the Protein kinase domain. Residues 30–38 (VGEGAYGVV) and Lys-53 each bind ATP.

The protein belongs to the protein kinase superfamily. CMGC Ser/Thr protein kinase family. MAP kinase subfamily. Mg(2+) is required as a cofactor. Post-translationally, phosphorylated by MST7.

It catalyses the reaction L-seryl-[protein] + ATP = O-phospho-L-seryl-[protein] + ADP + H(+). The catalysed reaction is L-threonyl-[protein] + ATP = O-phospho-L-threonyl-[protein] + ADP + H(+). Functionally, mitogen-activated protein kinase; part of the MST11-MST7-PMK1 MAP kinase (MAPK) cascade that is essential for appressorium formation, penetration and invasive growth. Central regulator of appressorium development that acts downstream of the cAMP signal. The MST11-MST7-PMK1 MAP kinase cascade transduces signals from the cell surface sensors MDB2 and SHO1 that recognize various surface signals such as surface hydrophobicity, cutin monomers, and rice leaf waxes. Regulates expression of secreted fungal effector proteins implicated of host immune defenses, preventing reactive oxygen species generation and excessive callose deposition at plasmodesmata. Furthermore, controls the hyphal constriction required for fungal growth from one rice cell to the neighboring cell, enabling host tissue colonization and blast disease. Targets downstream of the PMK1-MAPK pathway include transcription factor MST12 and pathogenicity-related genes GAS1 and GAS2, both of which are expressed during appressorium formation, even if regulation of MST12 is not associated with expression of GAS1 or GAS2. This Pyricularia oryzae (strain 70-15 / ATCC MYA-4617 / FGSC 8958) (Rice blast fungus) protein is Mitogen-activated protein kinase PMK11.